We begin with the raw amino-acid sequence, 194 residues long: Cytochrome b-245 light chain (194 aa).

At 2 to 7 (GQIEWA) the chain is on the cytoplasmic side. The chain crosses the membrane as a helical span at residues 8–30 (MWANEQALASGLILVAGGIVATA). Residues 31 to 35 (GRFTQ) lie on the Extracellular side of the membrane. A helical transmembrane segment spans residues 36–53 (WYFGTYAIAAGVLVCLLE). The Cytoplasmic portion of the chain corresponds to 54 to 69 (YPRGSRAKGSTLERCG). The stretch at 70 to 80 (QRYLTAVLKLL) is an intramembrane region. Residues 81–86 (GPLSRN) lie on the Cytoplasmic side of the membrane. The chain crosses the membrane as a helical span at residues 87 to 104 (YYFRAALHLALSVPAGFL). Residue L105 is a topological domain, extracellular. A helical membrane pass occupies residues 106–126 (ATILGTVCLVIASIIYLLAAV). The Cytoplasmic portion of the chain corresponds to 127–194 (RGEQWTPIEP…NPIPVTDEVV (68 aa)). The segment at 134-194 (IEPRPKERPQ…NPIPVTDEVV (61 aa)) is disordered. A Phosphothreonine modification is found at T147. K149 participates in a covalent cross-link: Glycyl lysine isopeptide (Lys-Gly) (interchain with G-Cter in ubiquitin).

This sequence belongs to the p22phox family. Component of the phagocyte NADPH oxidase core complex/cytochrome b558 complex, composed of CYBB (heavy chain (beta)) and CYBA (light chain (alpha)). Component of the phagocyte NADPH oxidase complex composed of an obligatory core heterodimer formed by the membrane proteins CYBA and CYBB and the cytosolic regulatory subunits NCF1/p47-phox, NCF2/p67-phox, NCF4/p40-phox and the small GTPase RAC1 or RAC2. Interacts with NCF1 (via SH3 domain). Interacts with SH3PXD2A. Interacts with DUOX1, DUOX2 and TPO. Interacts with NOX4; this interaction mediates superoxide generation. Interacts with calprotectin (S100A8/9). Interacts with GBP7. Interacts with NOXO1. Forms a heterodimer with NOX3 and is essential for activity and cell membrane localization of NOX3. Interacts with NOX1. In terms of processing, phosphorylation at Thr-147 enhances NADPH oxidase activity by promoting NCF1/p47-phox binding. Ubiquitinated at Lys-149 likely by RNF145.

It localises to the cell membrane. In terms of biological role, subunit of NADPH oxidase complexes that is required for the NADPH oxidase activity that generates, in various cell types, superoxide from molecular oxygen utilizing NADPH as an electron donor. Subunit of the phagocyte NADPH oxidase complex that mediates the transfer of electrons from cytosolic NADPH to O2 to produce the superoxide anion (O2(-)). In the activated complex, electrons are first transferred from NADPH to flavin adenine dinucleotide (FAD) and subsequently transferred via two heme molecules to molecular oxygen, producing superoxide through an outer-sphere reaction. Activation of the NADPH oxidase complex is initiated by the assembly of cytosolic subunits of the NADPH oxidase complex with the core NADPH oxidase complex to form a complex at the plasma membrane or phagosomal membrane. This activation process is initiated by phosphorylation dependent binding of the cytosolic NCF1/p47-phox subunit to the C-terminus of CYBA/p22-phox. Aassociates with NOX3 to form a functional NADPH oxidase constitutively generating superoxide. This chain is Cytochrome b-245 light chain, found in Oryctolagus cuniculus (Rabbit).